Consider the following 228-residue polypeptide: Protein 33K (228 aa).

Residues 1 to 156 (MAPKKKLQLP…GALRLAPNEP (156 aa)) are disordered. A compositionally biased stretch (acidic residues) spans 15-53 (TDEEEYWDSQAEEVLDEEEEMMEDWDSLDEASEAEEVSD). Low complexity-rich tracts occupy residues 54–63 (ETPSPSVAFP) and 104–119 (AAPT…ATAA). Residues 171–198 (YAIFQQSRGQEQELKIKNRSLRSLTRSC) form a necessary for nuclear subcellular location region. Positions 177 to 197 (SRGQEQELKIKNRSLRSLTRS) are RS-repeat; required for splicing enhancer activity.

The protein belongs to the adenoviridae splicing factor family. In terms of assembly, homooligomer. Interacts with DBP; this interaction occurs at a unique vertex during genome packaging. Interacts with IVa2; this interaction occurs at a unique vertex during genome packaging and seems to potentiate IVa2 and 33K oligomerization. In terms of processing, phosphorylated in vitro by human PKA and PRKDC. PRKDC inhibits, whereas PKA activates the splicing factor.

It is found in the host nucleus. Its function is as follows. Promotes alternative splicing of late transcripts by promoting splicing at weak 3' splice sites. Required for the temporal activation of major late pre-mRNA splicing at late times of infection. Induces the splicing and expression of the late capsid vertex protein. Functionally, probably functions as the small terminase that is part of the molecular motor that translocates genomic DNA in empty capsid during DNA packaging. This motor is located at a unique vertex and comprises at least the IVa2 ATPase, the small terminase 33K and probably a portal. Forms a ring-like structure of about 17 nm in which genomic DNA is translocated into the capsid. Stimulates IVa2 ATPase activity in the presence of the viral genome. Once the DNA is packaged, the terminase detaches: the 33K protein is present in the empty particles, but not in the mature virions. Also involved in virion assembly. In Homo sapiens (Human), this protein is Protein 33K.